Consider the following 69-residue polypeptide: DNA-directed RNA polymerase subunit epsilon (69 aa).

Belongs to the RNA polymerase subunit epsilon family. In terms of assembly, RNAP is composed of a core of 2 alpha, a beta and a beta' subunit. The core is associated with a delta subunit, and at least one of epsilon or omega. When a sigma factor is associated with the core the holoenzyme is formed, which can initiate transcription.

The catalysed reaction is RNA(n) + a ribonucleoside 5'-triphosphate = RNA(n+1) + diphosphate. A non-essential component of RNA polymerase (RNAP). The chain is DNA-directed RNA polymerase subunit epsilon from Geobacillus sp. (strain WCH70).